A 236-amino-acid polypeptide reads, in one-letter code: Small ribosomal subunit protein uS3 (236 aa).

Positions 39-107 constitute a KH type-2 domain; it reads VRHFLMQKLS…PTQLNIAEVR (69 aa).

Belongs to the universal ribosomal protein uS3 family. As to quaternary structure, part of the 30S ribosomal subunit. Forms a tight complex with proteins S10 and S14.

Functionally, binds the lower part of the 30S subunit head. Binds mRNA in the 70S ribosome, positioning it for translation. The sequence is that of Small ribosomal subunit protein uS3 from Blochmanniella pennsylvanica (strain BPEN).